Consider the following 212-residue polypeptide: Transcription antitermination protein NusB (212 aa).

Belongs to the NusB family.

Its function is as follows. Involved in transcription antitermination. Required for transcription of ribosomal RNA (rRNA) genes. Binds specifically to the boxA antiterminator sequence of the ribosomal RNA (rrn) operons. The polypeptide is Transcription antitermination protein NusB (Gloeothece citriformis (strain PCC 7424) (Cyanothece sp. (strain PCC 7424))).